The following is a 660-amino-acid chain: DNA mismatch repair protein MutL (660 aa).

Belongs to the DNA mismatch repair MutL/HexB family.

Functionally, this protein is involved in the repair of mismatches in DNA. It is required for dam-dependent methyl-directed DNA mismatch repair. May act as a 'molecular matchmaker', a protein that promotes the formation of a stable complex between two or more DNA-binding proteins in an ATP-dependent manner without itself being part of a final effector complex. This chain is DNA mismatch repair protein MutL, found in Solibacter usitatus (strain Ellin6076).